The chain runs to 197 residues: Probable low-affinity putrescine importer PlaP (197 aa).

Transmembrane regions (helical) follow at residues 33–53 (GVLI…HAGV), 85–105 (VLLV…TATA), 107–127 (INLG…SQFW), 140–160 (FNYL…WINL), and 163–183 (SSMV…ACVT).

Belongs to the amino acid-polyamine-organocation (APC) superfamily.

It localises to the cell inner membrane. It carries out the reaction putrescine(in) + H(+)(in) = putrescine(out) + H(+)(out). Its function is as follows. Putrescine importer. This Klebsiella pneumoniae protein is Probable low-affinity putrescine importer PlaP (plaP).